The sequence spans 403 residues: Sorting nexin-32 (403 aa).

A PX domain is found at 20–168 (LQGDSSLQVE…VFLEYGQDLS (149 aa)). Positions 258–335 (NQLRTSFLKL…KARTRNREVR (78 aa)) form a coiled coil.

It belongs to the sorting nexin family.

In terms of biological role, may be involved in several stages of intracellular trafficking. In Homo sapiens (Human), this protein is Sorting nexin-32 (SNX32).